The sequence spans 1831 residues: Transmembrane protein 131 homolog (1831 aa).

The first 29 residues, 1–29, serve as a signal peptide directing secretion; sequence MVPSIHKTSNRYRTIYFFLISLLITSTFA. Topologically, residues 30-1169 are lumenal; that stretch reads DQQAWPLPEE…QALPRPPFEN (1140 aa). Residues 118–294 form a papD-L domain region; the sequence is EMDPPMMDFG…QSKQIATLVL (177 aa). The chain crosses the membrane as a helical span at residues 1170 to 1190; sequence IMYYSCVTALIFCLVCVLACA. At 1191–1831 the chain is on the cytoplasmic side; that stretch reads YLEGDRAIAV…TDNENDEKNN (641 aa). Over residues 1223–1234 the composition is skewed to low complexity; sequence STTTPVPTVPST. Disordered regions lie at residues 1223-1252, 1325-1516, 1663-1759, and 1800-1831; these read STTT…RPST, GQQK…PTDD, QMKR…VSNP, and WSSS…EKNN. A compositionally biased stretch (acidic residues) spans 1338–1349; sequence PEFDEVEEEELA. Composition is skewed to low complexity over residues 1394-1407 and 1435-1448; these read PIIV…PPVQ and QVPP…TPKT. The segment covering 1455-1467 has biased composition (basic and acidic residues); that stretch reads EPEKPIKPSEQKK. Over residues 1480-1497 the composition is skewed to polar residues; sequence TPSKARTPSKTPSQSNRA. Residues 1500–1514 show a composition bias toward low complexity; the sequence is PASSPAPIAPTSAPT. 3 stretches are compositionally biased toward polar residues: residues 1669–1687, 1702–1733, and 1742–1758; these read SPSQ…SPQK, NQSS…NSIQ, and WGDN…TVSN. Residues 1808 to 1820 show a composition bias toward low complexity; sequence PPTQQPSTSQMPQ. Over residues 1822–1831 the composition is skewed to acidic residues; it reads TDNENDEKNN.

It belongs to the TMEM131 family. As to quaternary structure, may interact (via PapD-L domain) with collagen proteins (via C-terminus); the interaction is direct and is involved in assembly and secretion of collagen. In terms of tissue distribution, predominantly expressed in the intestine and hypodermis.

The protein resides in the membrane. It is found in the endoplasmic reticulum membrane. In terms of biological role, collagen binding transmembrane protein involved in collagen secretion, probably by recruiting the ER-to-Golgi transport complex TRAPPIII. Required for normal development. This is Transmembrane protein 131 homolog from Caenorhabditis elegans.